We begin with the raw amino-acid sequence, 212 residues long: Ribonuclease HII (212 aa).

In terms of domain architecture, RNase H type-2 spans 1–199 (MIGGIDEAGR…VGGRIGLGRN (199 aa)). A divalent metal cation-binding residues include D6, E7, and D101.

It belongs to the RNase HII family. The cofactor is Mn(2+). Mg(2+) serves as cofactor.

The protein resides in the cytoplasm. It carries out the reaction Endonucleolytic cleavage to 5'-phosphomonoester.. In terms of biological role, endonuclease that specifically degrades the RNA of RNA-DNA hybrids. The protein is Ribonuclease HII of Pyrobaculum aerophilum (strain ATCC 51768 / DSM 7523 / JCM 9630 / CIP 104966 / NBRC 100827 / IM2).